A 331-amino-acid polypeptide reads, in one-letter code: MSNNAAYAVTPVKTTSTSSRTTFHFAAGLCSGLTSSILLQPADLLKTRVQQSQKTASLLPTIKTILSSPHPIRGLWRGTLPSALRTGFGSALYFTSLNALRQGLAQTEASMAIAASSSDGKSRTSSSALPKLSNWGNLATGAVARTAAGFVMMPVTVLKVRYESDYYAYRSLYSAGRDIVRTEGVRGLFSGFGATAARDAPYAGLYVLFYEQLKRRLASVASSEQSEQPLKSTSSSSINFVSGGLAAGLATAITNPFDAVKTRLQLMPGKYGNMIRAVRLMIREDGVRSLFGGLGLRITRKALSSALAWTVYEELILRAEAHWAEKDKIDL.

3 Solcar repeats span residues 19–103, 132–216, and 234–318; these read SRTT…LRQG, LSNW…LKRR, and SSSS…LILR. 6 consecutive transmembrane segments (helical) span residues 25–50, 78–104, 138–163, 191–214, 238–264, and 293–311; these read FAAGLCSGLTSSILLQPADLLKTRVQ, GTLPSALRTGFGSALYFTSLNALRQGL, LATGAVARTAAGFVMMPVTVLKVRYE, GFGATAARDAPYAGLYVLFYEQLK, INFVSGGLAAGLATAITNPFDAVKTRL, and GLGLRITRKALSSALAWTV.

It belongs to the mitochondrial carrier (TC 2.A.29) family. SLC25A38 subfamily.

The protein localises to the mitochondrion inner membrane. It catalyses the reaction glycine(in) = glycine(out). Its function is as follows. Mitochondrial glycine transporter that imports glycine into the mitochondrial matrix. Plays an important role in providing glycine for the first enzymatic step in heme biosynthesis, the condensation of glycine with succinyl-CoA to produce 5-aminolevulinate (ALA) in the mitochondrial matrix. The sequence is that of Mitochondrial glycine transporter from Neosartorya fischeri (strain ATCC 1020 / DSM 3700 / CBS 544.65 / FGSC A1164 / JCM 1740 / NRRL 181 / WB 181) (Aspergillus fischerianus).